The following is a 400-amino-acid chain: Phosphoglycerate kinase (400 aa).

Substrate is bound by residues 21 to 23 (DFN), Arg36, 59 to 62 (HLGR), Arg119, and Arg160. Residues Lys211, Glu329, and 356–359 (GGDS) contribute to the ATP site.

This sequence belongs to the phosphoglycerate kinase family. As to quaternary structure, monomer.

Its subcellular location is the cytoplasm. The enzyme catalyses (2R)-3-phosphoglycerate + ATP = (2R)-3-phospho-glyceroyl phosphate + ADP. It participates in carbohydrate degradation; glycolysis; pyruvate from D-glyceraldehyde 3-phosphate: step 2/5. This chain is Phosphoglycerate kinase, found in Lactiplantibacillus plantarum (strain ATCC BAA-793 / NCIMB 8826 / WCFS1) (Lactobacillus plantarum).